The sequence spans 461 residues: Probable tubulin polyglutamylase TTLL9 (461 aa).

Residues 1–10 (MSRQKSQTSK) show a composition bias toward polar residues. The tract at residues 1-20 (MSRQKSQTSKGHGASKGKER) is disordered. A TTL domain is found at 22–402 (QRTLIRFKTT…EARLTGKEKR (381 aa)). Residues Lys-149 and 155 to 156 (QG) each bind ATP. Gln-155 serves as a coordination point for a protein. The span at 186-197 (QATRANVNPSGS) shows a compositional bias: polar residues. Residues 186 to 208 (QATRANVNPSGSHDTRSSDDQKD) are disordered. Over residues 198–208 (HDTRSSDDQKD) the composition is skewed to basic and acidic residues. ATP-binding positions include 218–221 (QRYV) and 231–233 (KFD). Arg-257 is a binding site for L-glutamate. 276–277 (TN) contributes to the ATP binding site. Residue Lys-294 participates in L-glutamate binding. Positions 348, 361, and 363 each coordinate Mg(2+). Residue Lys-379 coordinates L-glutamate.

This sequence belongs to the tubulin--tyrosine ligase family. The cofactor is Mg(2+).

The protein resides in the cytoplasm. It is found in the cytoskeleton. Its subcellular location is the cilium basal body. The protein localises to the flagellum axoneme. The catalysed reaction is (L-glutamyl)(n)-gamma-L-glutamyl-L-glutamyl-[protein] + L-glutamate + ATP = (L-glutamyl)(n+1)-gamma-L-glutamyl-L-glutamyl-[protein] + ADP + phosphate + H(+). Its function is as follows. Probable tubulin polyglutamylase that generates side chains of glutamate on the gamma-carboxyl group of specific glutamate residues within the C-terminal tail of target proteins. Similar to TTLL1, may acquire enzymatic activity only in complex with other proteins as it is most likely lacking domains important for autonomous activity. Mediates tubulin polyglutamylation which induces establishment of microtubule heterogeneity in sperm flagella, thereby playing a role in normal motile flagella axoneme structure and sperm flagella beating pattern. The sequence is that of Probable tubulin polyglutamylase TTLL9 (Ttll9) from Rattus norvegicus (Rat).